The following is a 344-amino-acid chain: Lysophosphatidic acid receptor 6 (344 aa).

The Extracellular segment spans residues 1–19; that stretch reads MVSVNSSHCFYNDSFKYTL. Asparagine 5 is a glycosylation site (N-linked (GlcNAc...) asparagine). A helical membrane pass occupies residues 20 to 46; it reads YGCMFSMVFVLGLISNCVAIYIFICVL. Over 47–55 the chain is Cytoplasmic; sequence KVRNETTTY. A helical membrane pass occupies residues 56-79; it reads MINLAMSDLLFVFTLPFRIFYFTT. Residues 80–92 are Extracellular-facing; sequence RNWPFGDLLCKIS. An intrachain disulfide couples cysteine 89 to cysteine 168. The helical transmembrane segment at 93–112 threads the bilayer; sequence VMLFYTNMYGSILFLTCISV. Residues 113-133 are Cytoplasmic-facing; sequence DRFLAIVYPFKSKTLRTKRNA. The chain crosses the membrane as a helical span at residues 134-154; the sequence is KIVCTGVWLTVIGGSAPAVFV. Over 155-181 the chain is Extracellular; the sequence is QSTHSQGNNASEACFENFPEATWKTYL. A helical membrane pass occupies residues 182-209; it reads SRIVIFIEIVGFFIPLILNVTCSSMVLK. Residues 210 to 227 lie on the Cytoplasmic side of the membrane; sequence TLTKPVTLSRSKINKTKV. Residues 228–253 traverse the membrane as a helical segment; sequence LKMIFVHLIIFCFCFVPYNINLILYS. The Extracellular portion of the chain corresponds to 254–272; the sequence is LVRTQTFVNCSVVAAVRTM. The helical transmembrane segment at 273-292 threads the bilayer; that stretch reads YPITLCIAVSNCCFDPIVYY. A lipid anchor (S-palmitoyl cysteine) is attached at cysteine 284. Residues 293–344 lie on the Cytoplasmic side of the membrane; it reads FTSDTIQNSIKMKNWSVRRSDFRFSEVHGAENFIQHNLQTLKSKIFDNESAA.

This sequence belongs to the G-protein coupled receptor 1 family. In terms of tissue distribution, expressed ubiquitously, including in skin and hair follicle cells. Detected in both Henle's and Huxley's layers of the inner root sheath of the hair follicle and in suprabasal layers of the epidermis (at protein level). Expressed at low levels in peripheral blood leukocytes.

It localises to the cell membrane. Binds to oleoyl-L-alpha-lysophosphatidic acid (LPA). Intracellular cAMP is involved in the receptor activation. Important for the maintenance of hair growth and texture. This chain is Lysophosphatidic acid receptor 6 (LPAR6), found in Homo sapiens (Human).